The following is a 241-amino-acid chain: Pyridoxine 5'-phosphate synthase (241 aa).

Asn-7 provides a ligand contact to 3-amino-2-oxopropyl phosphate. Residue 9 to 10 (DH) participates in 1-deoxy-D-xylulose 5-phosphate binding. Residue Arg-18 participates in 3-amino-2-oxopropyl phosphate binding. His-43 functions as the Proton acceptor in the catalytic mechanism. 1-deoxy-D-xylulose 5-phosphate-binding residues include Arg-45 and His-50. Glu-70 serves as the catalytic Proton acceptor. A 1-deoxy-D-xylulose 5-phosphate-binding site is contributed by Thr-100. The active-site Proton donor is the His-191. 3-amino-2-oxopropyl phosphate-binding positions include Gly-192 and 213–214 (GH).

This sequence belongs to the PNP synthase family. As to quaternary structure, homooctamer; tetramer of dimers.

Its subcellular location is the cytoplasm. The catalysed reaction is 3-amino-2-oxopropyl phosphate + 1-deoxy-D-xylulose 5-phosphate = pyridoxine 5'-phosphate + phosphate + 2 H2O + H(+). It participates in cofactor biosynthesis; pyridoxine 5'-phosphate biosynthesis; pyridoxine 5'-phosphate from D-erythrose 4-phosphate: step 5/5. Catalyzes the complicated ring closure reaction between the two acyclic compounds 1-deoxy-D-xylulose-5-phosphate (DXP) and 3-amino-2-oxopropyl phosphate (1-amino-acetone-3-phosphate or AAP) to form pyridoxine 5'-phosphate (PNP) and inorganic phosphate. This is Pyridoxine 5'-phosphate synthase from Acidithiobacillus ferrooxidans (strain ATCC 23270 / DSM 14882 / CIP 104768 / NCIMB 8455) (Ferrobacillus ferrooxidans (strain ATCC 23270)).